The sequence spans 902 residues: Leucine-rich repeat-containing G-protein coupled receptor 5 (902 aa).

An N-terminal signal peptide occupies residues 1-22 (MDTSKTSFFLFSVLCSLQLVGA). Over 23–558 (ARPGKQQRSC…HLFGSWLTRT (536 aa)) the chain is Extracellular. 2 cysteine pairs are disulfide-bonded: Cys32-Cys38 and Cys36-Cys49. One can recognise an LRRNT domain in the interval 32 to 61 (CPTPCECEQEGMLVRVDCSDRALTSLPRNL). LRR repeat units lie at residues 41–61 (EGMLVRVDCSDRALTSLPRNL), 62–85 (SIFTSYLDLSMNNITNLPSNVMHN), 86–109 (LHFLEELRLAGNDLTYIPKGAFAG), 111–133 (GSLKVLMLQNNLLRQVPSEALHN), 134–157 (LRSLQSLRLDANHISYVPPSSFNG), 159–181 (FSLRHLWLDDNSLTEIPVRALES), 182–205 (LSALQAMTLALNKIHHIPDYAFRN), 207–229 (SSLVVLHLHNNRIYSLGKKCFDG), 230–253 (LHSLETLDLNYNNLDEFPAAIKTL), 254–276 (KNLKELGFHSNNIKSIPEQAFIG), 278–300 (PSLITIHFYDNPIQHVGRSAFQH), 302–324 (PELRTLILNGASQITEFPDLTGT), 325–347 (TSLESLTLTGAQLVYLPSAVCTQ), 348–372 (LPNLQVLDLSYNHIKDLPSFSGCQR), 374–393 (QKIDLRHNEVYEIRSTTFQQ), 394–417 (LVGLRSLDLAWNKIAVIHPNSFSS), and 418–441 (LPSLIKLDLSSNHLTSFPVTGLHG). N-linked (GlcNAc...) asparagine glycosylation is found at Asn60 and Asn74. A glycan (N-linked (GlcNAc...) asparagine) is linked at Asn205. The cysteines at positions 345 and 370 are disulfide-linked. Residues Cys476 and Cys537 are joined by a disulfide bond. Asn496 carries N-linked (GlcNAc...) asparagine glycosylation. The helical transmembrane segment at 559–579 (GVWLIVLLSFVCNALVIATVF) threads the bilayer. Residues 580 to 589 (RPLSYVPSIK) lie on the Cytoplasmic side of the membrane. The helical transmembrane segment at 590–610 (LLIGLIAIMNTLMGLSSGVLA) threads the bilayer. The stretch at 598 to 619 (MNTLMGLSSGVLATVDALTFGN) is one LRR 18 repeat. Residues 611 to 634 (TVDALTFGNFAQYGAWWESGVGCQ) are Extracellular-facing. A disulfide bridge links Cys633 with Cys708. Residues 635-655 (ITGFLSVFAAETSIFLLTVAA) traverse the membrane as a helical segment. Topologically, residues 656 to 678 (LERGFSIKCTTKFETKSSFINVK) are cytoplasmic. A helical membrane pass occupies residues 679–699 (LSIVFCFLLSIVIAVSPLLSG). The Extracellular portion of the chain corresponds to 700–718 (STYGTSPLCFPLLFGDPSS). A helical transmembrane segment spans residues 719 to 739 (MGFMVALVLLNSLCFLVMTIA). Topologically, residues 740–763 (YTKLYCSLEKGELENIWDCSMVKH) are cytoplasmic. A helical membrane pass occupies residues 764–784 (IALLLFTNCILYCPVAFLSFS). Residues 785-798 (SLLNLTFISPEVNK) are Extracellular-facing. 2 N-linked (GlcNAc...) asparagine glycosylation sites follow: Asn788 and Asn797. Residues 799–819 (SILLLIIPLPACLNPLLYILF) traverse the membrane as a helical segment. The Cytoplasmic segment spans residues 820–902 (NPHFKEDIGS…LSAVAFVPCH (83 aa)).

This sequence belongs to the G-protein coupled receptor 1 family.

Its subcellular location is the cell membrane. It is found in the golgi apparatus. The protein resides in the trans-Golgi network membrane. Receptor for R-spondins that potentiates the canonical Wnt signaling pathway and acts as a stem cell marker of the intestinal epithelium and the hair follicle. Upon binding to R-spondins (RSPO1, RSPO2, RSPO3 or RSPO4), associates with phosphorylated LRP6 and frizzled receptors that are activated by extracellular Wnt receptors, triggering the canonical Wnt signaling pathway to increase expression of target genes. In contrast to classical G-protein coupled receptors, does not activate heterotrimeric G-proteins to transduce the signal. Involved in the development and/or maintenance of the adult intestinal stem cells during postembryonic development. The polypeptide is Leucine-rich repeat-containing G-protein coupled receptor 5 (lgr5) (Xenopus tropicalis (Western clawed frog)).